The following is an 83-amino-acid chain: Translation initiation factor IF-1 (83 aa).

The S1-like domain occupies 1 to 72 (MAKEESIEMQ…TRGRIVYREA (72 aa)).

The protein belongs to the IF-1 family. In terms of assembly, component of the 30S ribosomal translation pre-initiation complex which assembles on the 30S ribosome in the order IF-2 and IF-3, IF-1 and N-formylmethionyl-tRNA(fMet); mRNA recruitment can occur at any time during PIC assembly.

It localises to the cytoplasm. Functionally, one of the essential components for the initiation of protein synthesis. Stabilizes the binding of IF-2 and IF-3 on the 30S subunit to which N-formylmethionyl-tRNA(fMet) subsequently binds. Helps modulate mRNA selection, yielding the 30S pre-initiation complex (PIC). Upon addition of the 50S ribosomal subunit IF-1, IF-2 and IF-3 are released leaving the mature 70S translation initiation complex. This chain is Translation initiation factor IF-1, found in Coxiella burnetii (strain Dugway 5J108-111).